The following is a 63-amino-acid chain: Trypsin inhibitor 5 (63 aa).

The signal sequence occupies residues 1–21 (MASVAESSGVVEVIELISDGG). A propeptide spanning residues 22–34 (NDLPRKIMSGRHG) is cleaved from the precursor. 3 cysteine pairs are disulfide-bonded: cysteine 37-cysteine 54, cysteine 44-cysteine 56, and cysteine 50-cysteine 62.

It belongs to the protease inhibitor I7 (squash-type serine protease inhibitor) family.

The protein localises to the secreted. Its function is as follows. Inhibits trypsin. This is Trypsin inhibitor 5 from Luffa aegyptiaca (Sponge gourd).